A 404-amino-acid polypeptide reads, in one-letter code: MSAKRRLFTSESVTEGHPDKICDQISDAILDAILEKDPNARVACETSVTTGLVLVSGEITTSTYVDIPRIVRDTVREIGYTRAKFGFDADTCAVLTAIDEQSPDIAMGVDQALEAREGQMTDEEIEAIGAGDQGLMFGFACNETEELMPLPISLAHRLSRRLAEVRKTDVLPYLRPDGKTQVTIEYDENGKPVRVDTIVISTQHHPEIEHDQIERDMKEHVIKPIVPAELLDENTKYFINPTGRFVIGGPQGDAGLTGRKIIVDTYGGYARHGGGAFSGKDPTKVDRSAAYAARYVAKNIVAAGLADKCEVQLAYAIGVARPVSISIDTFGTGKVSEDVLIEVVRNNFDLRPAGIIKMLDLRRPIYKQTAAYGHFGRTDVDLPWERTDKAAVLKEQALALAKNE.

An ATP-binding site is contributed by H17. D19 contributes to the Mg(2+) binding site. E45 is a binding site for K(+). L-methionine-binding residues include E58 and Q101. The segment at 101–111 (QSPDIAMGVDQ) is flexible loop. ATP contacts are provided by residues 177 to 179 (DGK), 244 to 245 (RF), D253, 259 to 260 (RK), A276, and K280. D253 is a binding site for L-methionine. L-methionine is bound at residue K284.

This sequence belongs to the AdoMet synthase family. Homotetramer; dimer of dimers. Requires Mg(2+) as cofactor. K(+) is required as a cofactor.

It is found in the cytoplasm. It catalyses the reaction L-methionine + ATP + H2O = S-adenosyl-L-methionine + phosphate + diphosphate. It participates in amino-acid biosynthesis; S-adenosyl-L-methionine biosynthesis; S-adenosyl-L-methionine from L-methionine: step 1/1. In terms of biological role, catalyzes the formation of S-adenosylmethionine (AdoMet) from methionine and ATP. The overall synthetic reaction is composed of two sequential steps, AdoMet formation and the subsequent tripolyphosphate hydrolysis which occurs prior to release of AdoMet from the enzyme. The polypeptide is S-adenosylmethionine synthase (Geobacillus thermodenitrificans (strain NG80-2)).